Consider the following 142-residue polypeptide: Protein archease (142 aa).

Asp-12, Asp-141, and Ile-142 together coordinate Ca(2+).

This sequence belongs to the archease family. As to quaternary structure, in solution, exists as a monomer, trimer and hexamer. Oligomeric states form a tripartite complex with tRNA and PAB1947 methyltransferase.

Its function is as follows. Activates the tRNA-splicing ligase complex by facilitating the enzymatic turnover of catalytic subunit RtcB. Acts by promoting the guanylylation of RtcB, a key intermediate step in tRNA ligation. Can also alter the NTP specificity of RtcB such that ATP, dGTP or ITP is used efficiently. Chaperone or modulator of proteins involved in DNA or RNA processing. Protects the tRNA (cytosine-5-)-methyltransferase PAB1947 against aggregation and increases its specificity. The protein is Protein archease of Pyrococcus abyssi (strain GE5 / Orsay).